The sequence spans 167 residues: uncharacterized protein (167 aa).

This is an uncharacterized protein from Aquifex aeolicus (strain VF5).